The chain runs to 285 residues: Bifunctional protein FolD (285 aa).

Residues 166–168 (GAS) and I232 each bind NADP(+).

This sequence belongs to the tetrahydrofolate dehydrogenase/cyclohydrolase family. As to quaternary structure, homodimer.

It carries out the reaction (6R)-5,10-methylene-5,6,7,8-tetrahydrofolate + NADP(+) = (6R)-5,10-methenyltetrahydrofolate + NADPH. It catalyses the reaction (6R)-5,10-methenyltetrahydrofolate + H2O = (6R)-10-formyltetrahydrofolate + H(+). Its pathway is one-carbon metabolism; tetrahydrofolate interconversion. Catalyzes the oxidation of 5,10-methylenetetrahydrofolate to 5,10-methenyltetrahydrofolate and then the hydrolysis of 5,10-methenyltetrahydrofolate to 10-formyltetrahydrofolate. The polypeptide is Bifunctional protein FolD (Pseudoalteromonas atlantica (strain T6c / ATCC BAA-1087)).